Here is a 99-residue protein sequence, read N- to C-terminus: Malonate decarboxylase acyl carrier protein (99 aa).

Serine 25 carries the O-(phosphoribosyl dephospho-coenzyme A)serine modification.

Belongs to the MdcC family. Post-translationally, covalently binds the prosthetic group of malonate decarboxylase.

It localises to the cytoplasm. In terms of biological role, subunit of malonate decarboxylase, it is an acyl carrier protein to which acetyl and malonyl thioester residues are bound via a 2'-(5''-phosphoribosyl)-3'-dephospho-CoA prosthetic group and turn over during the catalytic mechanism. The sequence is that of Malonate decarboxylase acyl carrier protein from Stutzerimonas stutzeri (strain A1501) (Pseudomonas stutzeri).